A 344-amino-acid chain; its full sequence is Uroporphyrinogen decarboxylase (344 aa).

Residues 23 to 27 (RQAGR), D73, Y149, T204, and H321 each bind substrate.

The protein belongs to the uroporphyrinogen decarboxylase family. Homodimer.

It is found in the cytoplasm. It carries out the reaction uroporphyrinogen III + 4 H(+) = coproporphyrinogen III + 4 CO2. The protein operates within porphyrin-containing compound metabolism; protoporphyrin-IX biosynthesis; coproporphyrinogen-III from 5-aminolevulinate: step 4/4. In terms of biological role, catalyzes the decarboxylation of four acetate groups of uroporphyrinogen-III to yield coproporphyrinogen-III. The chain is Uroporphyrinogen decarboxylase from Francisella tularensis subsp. tularensis (strain FSC 198).